Reading from the N-terminus, the 461-residue chain is ATP synthase subunit beta (461 aa).

Position 151 to 158 (151 to 158 (GGAGVGKT)) interacts with ATP.

It belongs to the ATPase alpha/beta chains family. In terms of assembly, F-type ATPases have 2 components, CF(1) - the catalytic core - and CF(0) - the membrane proton channel. CF(1) has five subunits: alpha(3), beta(3), gamma(1), delta(1), epsilon(1). CF(0) has three main subunits: a(1), b(2) and c(9-12). The alpha and beta chains form an alternating ring which encloses part of the gamma chain. CF(1) is attached to CF(0) by a central stalk formed by the gamma and epsilon chains, while a peripheral stalk is formed by the delta and b chains.

It is found in the cell inner membrane. The catalysed reaction is ATP + H2O + 4 H(+)(in) = ADP + phosphate + 5 H(+)(out). In terms of biological role, produces ATP from ADP in the presence of a proton gradient across the membrane. The catalytic sites are hosted primarily by the beta subunits. This is ATP synthase subunit beta from Alteromonas mediterranea (strain DSM 17117 / CIP 110805 / LMG 28347 / Deep ecotype).